The sequence spans 799 residues: Pentatricopeptide repeat-containing protein At2g26790, mitochondrial (799 aa).

The N-terminal 27 residues, 1 to 27 (MRFSPTFFLLSQLRLTRRRAATSSRFY), are a transit peptide targeting the mitochondrion. PPR repeat units follow at residues 145–179 (LIRVSGALVKAYVSLGMFDEATDVLFQSKRLDCVV), 180–214 (DIKACNFLMNRMTEFGKIGMLMTLFKQLKQLGLCA), 215–250 (NEYTYAIVVKALCRKGNLEEAAMLLIENESVFGYKT), 251–278 (FINGLCVTGETEKAVALILELIDRKYLA), 282–316 (LRAVLGMVVRGFCNEMKMKAAESVIIEMEEIGFGL), 317–351 (DVYACLAVIDRYCKNMNLPEALGFLDKMLGKGLKV), 352–386 (NCVIVSLILQCYCKMDMCLEALEKFKEFRDMNIFL), 387–421 (DRVCYNVAFDALSKLGRVEEAFELLQEMKDRGIVP), 422–456 (DVINYTTLIDGYCLQGKVVDALDLIDEMIGNGMSP), 457–491 (DLITYNVLVSGLARNGHEEEVLEIYERMKAEGPKP), 492–522 (NAVTNSVIIEGLCFARKVKEAEDFFSSLEQK), 523–553 (CPENKASFVKGYCEAGLSKKAYKAFVRLEYP), 555–589 (RKSVYIKLFFSLCIEGYLEKAHDVLKKMSAYRVEP), 590–624 (GRSMCGKMIGAFCKLNNVREAQVLFDTMVERGLIP), 625–659 (DLFTYTIMIHTYCRLNELQKAESLFEDMKQRGIKP), 660–695 (DVVTYTVLLDRYLKLDPEHHETCSVQGEVGKRKASE), 708–742 (DVVCYTVLIDRQCKMNNLEQAAELFDRMIDSGLEP), and 743–777 (DMVAYTTLISSYFRKGYIDMAVTLVTELSKKYNIP).

The protein belongs to the PPR family. P subfamily.

The protein localises to the mitochondrion. The chain is Pentatricopeptide repeat-containing protein At2g26790, mitochondrial from Arabidopsis thaliana (Mouse-ear cress).